Reading from the N-terminus, the 940-residue chain is Isoleucine--tRNA ligase (940 aa).

A 'HIGH' region motif is present at residues 58 to 68; that stretch reads PYANGSIHIGH. Glu-564 serves as a coordination point for L-isoleucyl-5'-AMP. The 'KMSKS' region signature appears at 605-609; sequence KMSKS. Lys-608 provides a ligand contact to ATP. Cys-903, Cys-906, Cys-923, and Cys-926 together coordinate Zn(2+).

The protein belongs to the class-I aminoacyl-tRNA synthetase family. IleS type 1 subfamily. In terms of assembly, monomer. The cofactor is Zn(2+).

Its subcellular location is the cytoplasm. The catalysed reaction is tRNA(Ile) + L-isoleucine + ATP = L-isoleucyl-tRNA(Ile) + AMP + diphosphate. Catalyzes the attachment of isoleucine to tRNA(Ile). As IleRS can inadvertently accommodate and process structurally similar amino acids such as valine, to avoid such errors it has two additional distinct tRNA(Ile)-dependent editing activities. One activity is designated as 'pretransfer' editing and involves the hydrolysis of activated Val-AMP. The other activity is designated 'posttransfer' editing and involves deacylation of mischarged Val-tRNA(Ile). In Shewanella sediminis (strain HAW-EB3), this protein is Isoleucine--tRNA ligase.